The sequence spans 230 residues: 3-dehydroquinate dehydratase (230 aa).

Residues Ser26, 51–53 (EIR), and Arg84 contribute to the 3-dehydroquinate site. Catalysis depends on His127, which acts as the Proton donor/acceptor. The Schiff-base intermediate with substrate role is filled by Lys150. Residues Arg190, Thr209, and Gln213 each coordinate 3-dehydroquinate.

This sequence belongs to the type-I 3-dehydroquinase family. In terms of assembly, homodimer.

The enzyme catalyses 3-dehydroquinate = 3-dehydroshikimate + H2O. The protein operates within metabolic intermediate biosynthesis; chorismate biosynthesis; chorismate from D-erythrose 4-phosphate and phosphoenolpyruvate: step 3/7. In terms of biological role, involved in the third step of the chorismate pathway, which leads to the biosynthesis of aromatic amino acids. Catalyzes the cis-dehydration of 3-dehydroquinate (DHQ) and introduces the first double bond of the aromatic ring to yield 3-dehydroshikimate. The sequence is that of 3-dehydroquinate dehydratase from Thermoplasma volcanium (strain ATCC 51530 / DSM 4299 / JCM 9571 / NBRC 15438 / GSS1).